Reading from the N-terminus, the 486-residue chain is UDP-N-acetylmuramate--L-alanine ligase (486 aa).

123-129 (GTHGKTT) contributes to the ATP binding site.

It belongs to the MurCDEF family.

The protein localises to the cytoplasm. It carries out the reaction UDP-N-acetyl-alpha-D-muramate + L-alanine + ATP = UDP-N-acetyl-alpha-D-muramoyl-L-alanine + ADP + phosphate + H(+). It functions in the pathway cell wall biogenesis; peptidoglycan biosynthesis. Functionally, cell wall formation. The protein is UDP-N-acetylmuramate--L-alanine ligase of Pseudomonas savastanoi pv. phaseolicola (strain 1448A / Race 6) (Pseudomonas syringae pv. phaseolicola (strain 1448A / Race 6)).